The primary structure comprises 470 residues: Glutamate--tRNA ligase (470 aa).

Positions 15–25 (PSPTGFLHIGG) match the 'HIGH' region motif. The 'KMSKS' region signature appears at 240 to 244 (KLSKR). Lys243 serves as a coordination point for ATP.

Belongs to the class-I aminoacyl-tRNA synthetase family. Glutamate--tRNA ligase type 1 subfamily. As to quaternary structure, monomer.

The protein resides in the cytoplasm. The catalysed reaction is tRNA(Glu) + L-glutamate + ATP = L-glutamyl-tRNA(Glu) + AMP + diphosphate. Catalyzes the attachment of glutamate to tRNA(Glu) in a two-step reaction: glutamate is first activated by ATP to form Glu-AMP and then transferred to the acceptor end of tRNA(Glu). In Caulobacter vibrioides (strain ATCC 19089 / CIP 103742 / CB 15) (Caulobacter crescentus), this protein is Glutamate--tRNA ligase.